The primary structure comprises 332 residues: Fructose-1,6-bisphosphatase class 1 (332 aa).

Glu89, Asp110, Leu112, and Asp113 together coordinate Mg(2+). Substrate-binding positions include 113–116 (DGSS), Asn206, Tyr239, 257–259 (YLY), and Lys269. Glu275 serves as a coordination point for Mg(2+).

The protein belongs to the FBPase class 1 family. Homotetramer. Mg(2+) is required as a cofactor.

It localises to the cytoplasm. The enzyme catalyses beta-D-fructose 1,6-bisphosphate + H2O = beta-D-fructose 6-phosphate + phosphate. The protein operates within carbohydrate biosynthesis; gluconeogenesis. The polypeptide is Fructose-1,6-bisphosphatase class 1 (Salmonella typhimurium (strain LT2 / SGSC1412 / ATCC 700720)).